A 280-amino-acid chain; its full sequence is MKNSLLLYAEDETNGEASTCGRILIFLSWVLVVLTMPFSLLVCFKVVQEYERAVIFRLGRLMQGGAKGPGIFFILPCIDAYARVDLRTRTYDVPPQEVLTKDSVTVSVDAVVYYRVSNATVSIANVENAHHSTRLLAQTTLRNTMGTRHLHEILSERMTISGSMQLSLDEATEAWGIKVERVEIKDVRLPVQLQRAMAAEAEAAREARAKVIAAEGEQKASRALREASEVIGDSPAALQLRYLQTLNTISAEKNSTIVFPLPIDILTYFMKSKEAFVPNA.

The helical transmembrane segment at 23–43 threads the bilayer; sequence ILIFLSWVLVVLTMPFSLLVC.

The protein belongs to the band 7/mec-2 family.

It is found in the membrane. This Anopheles gambiae (African malaria mosquito) protein is Band 7 protein AGAP004871.